The primary structure comprises 101 residues: Small ribosomal subunit protein uS14 (101 aa).

Residues Ser-33–Arg-69 form a disordered region. Residues Leu-51–Gly-68 are compositionally biased toward basic and acidic residues.

This sequence belongs to the universal ribosomal protein uS14 family. In terms of assembly, part of the 30S ribosomal subunit. Contacts proteins S3 and S10.

In terms of biological role, binds 16S rRNA, required for the assembly of 30S particles and may also be responsible for determining the conformation of the 16S rRNA at the A site. This Xanthomonas axonopodis pv. citri (strain 306) protein is Small ribosomal subunit protein uS14.